The chain runs to 295 residues: 5'-adenylylsulfate reductase-like 6 (295 aa).

Positions 1-22 are cleaved as a signal peptide; it reads MEKKLTLLLLVVVVLFVNLTNA. One can recognise a Thioredoxin domain in the interval 23–161; it reads TVRVQICPRE…LVAFYTDVTG (139 aa). A glycan (N-linked (GlcNAc...) asparagine) is linked at Asn136. The chain crosses the membrane as a helical span at residues 208–228; it reads ATVFVLLRLLHLISPTMVVFV.

The protein resides in the membrane. The polypeptide is 5'-adenylylsulfate reductase-like 6 (APRL6) (Arabidopsis thaliana (Mouse-ear cress)).